The chain runs to 363 residues: NAD(P)H-quinone oxidoreductase subunit 1, chloroplastic (363 aa).

6 consecutive transmembrane segments (helical) span residues 30 to 50 (LVPI…IVWL), 98 to 118 (FSIG…VIPF), 129 to 149 (IGIF…LMSG), 248 to 268 (YSGI…LLSS), 300 to 320 (IIGT…FLFI), and 343 to 363 (FLLP…LLSL).

It belongs to the complex I subunit 1 family. NDH is composed of at least 16 different subunits, 5 of which are encoded in the nucleus.

Its subcellular location is the plastid. It localises to the chloroplast thylakoid membrane. It catalyses the reaction a plastoquinone + NADH + (n+1) H(+)(in) = a plastoquinol + NAD(+) + n H(+)(out). The enzyme catalyses a plastoquinone + NADPH + (n+1) H(+)(in) = a plastoquinol + NADP(+) + n H(+)(out). In terms of biological role, NDH shuttles electrons from NAD(P)H:plastoquinone, via FMN and iron-sulfur (Fe-S) centers, to quinones in the photosynthetic chain and possibly in a chloroplast respiratory chain. The immediate electron acceptor for the enzyme in this species is believed to be plastoquinone. Couples the redox reaction to proton translocation, and thus conserves the redox energy in a proton gradient. The sequence is that of NAD(P)H-quinone oxidoreductase subunit 1, chloroplastic from Gossypium hirsutum (Upland cotton).